Reading from the N-terminus, the 393-residue chain is Nucleoside permease NupC (393 aa).

The next 9 membrane-spanning stretches (helical) occupy residues 3 to 23, 32 to 52, 87 to 107, 168 to 188, 191 to 211, 249 to 269, 272 to 292, 334 to 354, and 372 to 392; these read YLIG…ASSG, IVVM…TGIG, TTFF…IGIL, LCAS…MTML, EYVV…ASII, VVVA…NGIF, VFGI…AFLV, AIVS…IIAG, and LKLL…VGLI.

This sequence belongs to the concentrative nucleoside transporter (CNT) (TC 2.A.41) family.

It localises to the cell membrane. Transport of the pyrimidine nucleoside uridine. This chain is Nucleoside permease NupC, found in Bacillus subtilis (strain 168).